We begin with the raw amino-acid sequence, 323 residues long: tRNA U34 carboxymethyltransferase (323 aa).

Residues Lys-91, Trp-105, Lys-110, Gly-130, 152 to 154 (DPS), 181 to 182 (IE), Met-196, Tyr-200, and Arg-315 each bind carboxy-S-adenosyl-L-methionine.

It belongs to the class I-like SAM-binding methyltransferase superfamily. CmoB family. In terms of assembly, homotetramer.

It carries out the reaction carboxy-S-adenosyl-L-methionine + 5-hydroxyuridine(34) in tRNA = 5-carboxymethoxyuridine(34) in tRNA + S-adenosyl-L-homocysteine + H(+). In terms of biological role, catalyzes carboxymethyl transfer from carboxy-S-adenosyl-L-methionine (Cx-SAM) to 5-hydroxyuridine (ho5U) to form 5-carboxymethoxyuridine (cmo5U) at position 34 in tRNAs. In Vibrio vulnificus (strain CMCP6), this protein is tRNA U34 carboxymethyltransferase.